The sequence spans 90 residues: Nodulation protein NolS (90 aa).

Its function is as follows. Involved in nodulation of a particular host, M.lupulina. This is Nodulation protein NolS (nolS) from Sinorhizobium meliloti (strain Sm2011 / Rm2011 / 2011).